A 370-amino-acid polypeptide reads, in one-letter code: MASLPTQGPAAPDFFNGLLPASSSPVNQSSETVVGNGSAAGPGSQAITPFQSLQLVHQLKGLIVLLYSIVVVVGLVGNCLLVLVIARVRRLHNVTNFLIGNLALSDVLMCTACVPLTLAYAFEPRGWVFGGGLCHLVFFLQPVTVYVSVFTLTTIAVDRYVVLVHPLRRRISLRFSAYAVLAIWALSAVLALPAALHTYHVELKPHRVRLCEEFWGSQERQRQLYAWGLLLVTYLLPLLVILLSYVRVSVNLRNRVVPGCVTQSQADWDRARRRRTFCLLVVVVVVFAVCWLPLHVFNLLRDLDPHAIDPYAFGLVQLLCHWLAMSSACYNPFIYAWLHDSFREELRKLLLAWPRKIAPHGQSMTVSVVI.

Residues 1–62 (MASLPTQGPA…LQLVHQLKGL (62 aa)) lie on the Extracellular side of the membrane. Residues N27 and N36 are each glycosylated (N-linked (GlcNAc...) asparagine). The helical transmembrane segment at 63–83 (IVLLYSIVVVVGLVGNCLLVL) threads the bilayer. At 84–101 (VIARVRRLHNVTNFLIGN) the chain is on the cytoplasmic side. The chain crosses the membrane as a helical span at residues 102 to 122 (LALSDVLMCTACVPLTLAYAF). The Extracellular segment spans residues 123–126 (EPRG). A helical membrane pass occupies residues 127–147 (WVFGGGLCHLVFFLQPVTVYV). A disulfide bridge links C134 with C211. Residues 148 to 175 (SVFTLTTIAVDRYVVLVHPLRRRISLRF) are Cytoplasmic-facing. The chain crosses the membrane as a helical span at residues 176–196 (SAYAVLAIWALSAVLALPAAL). The Extracellular portion of the chain corresponds to 197 to 225 (HTYHVELKPHRVRLCEEFWGSQERQRQLY). Residues 226–246 (AWGLLLVTYLLPLLVILLSYV) traverse the membrane as a helical segment. At 247-276 (RVSVNLRNRVVPGCVTQSQADWDRARRRRT) the chain is on the cytoplasmic side. Residues 277–297 (FCLLVVVVVVFAVCWLPLHVF) traverse the membrane as a helical segment. At 298–317 (NLLRDLDPHAIDPYAFGLVQ) the chain is on the extracellular side. Residues 318 to 338 (LLCHWLAMSSACYNPFIYAWL) form a helical membrane-spanning segment. The Cytoplasmic segment spans residues 339 to 369 (HDSFREELRKLLLAWPRKIAPHGQSMTVSVV). The tract at residues 365–370 (TVSVVI) is required for interaction with GRIP1, GRIP2 and PICK1.

It belongs to the G-protein coupled receptor 1 family. In terms of assembly, interacts through its C-terminal region with the PDZ domain-containing proteins GRIP1, GRIP2 and PICK1. Interacts with PDZ domains 4 and 5 of GRIP1 and with the PDZ domain of PICK1.

Its subcellular location is the cell membrane. Its function is as follows. Receptor for prolactin-releasing peptide (PrRP). Implicated in lactation, regulation of food intake and pain-signal processing. The protein is Prolactin-releasing peptide receptor (PRLHR) of Bos taurus (Bovine).